Consider the following 263-residue polypeptide: Polyamine aminopropyltransferase (263 aa).

Positions 1-221 (MARHPYRRLR…AVMAFQSSPK (221 aa)) constitute a PABS domain. Residues aspartate 98 and 126-127 (DG) each bind S-methyl-5'-thioadenosine. Aspartate 144 functions as the Proton acceptor in the catalytic mechanism.

Belongs to the spermidine/spermine synthase family. In terms of assembly, homodimer or homotetramer.

It localises to the cytoplasm. It carries out the reaction S-adenosyl 3-(methylsulfanyl)propylamine + putrescine = S-methyl-5'-thioadenosine + spermidine + H(+). It participates in amine and polyamine biosynthesis; spermidine biosynthesis; spermidine from putrescine: step 1/1. In terms of biological role, catalyzes the irreversible transfer of a propylamine group from the amino donor S-adenosylmethioninamine (decarboxy-AdoMet) to putrescine (1,4-diaminobutane) to yield spermidine. This Neisseria meningitidis serogroup A / serotype 4A (strain DSM 15465 / Z2491) protein is Polyamine aminopropyltransferase.